We begin with the raw amino-acid sequence, 311 residues long: Olfactory receptor 5L2 (311 aa).

The Extracellular segment spans residues 1-25 (MGKENCTTVAEFILLGLSDVPELRV). The N-linked (GlcNAc...) asparagine glycan is linked to asparagine 5. A helical membrane pass occupies residues 26–46 (CLFLLFLLIYGVTLLANLGMT). The Cytoplasmic segment spans residues 47 to 54 (ALIQVSSR). Residues 55 to 75 (LHTPVYFFLSHLSFVDFCYSS) traverse the membrane as a helical segment. Residues 76-99 (IIVPKMLANIFNKDKAISFLGCMV) are Extracellular-facing. The cysteines at positions 97 and 189 are disulfide-linked. Residues 100-120 (QFYLFCTCGVTEVFLLAVMAY) form a helical membrane-spanning segment. Topologically, residues 121 to 139 (DRFVAICNPLLYMVTMSQK) are cytoplasmic. A helical membrane pass occupies residues 140-160 (LRVELTSCCYFCGTVCSLIHS). The Extracellular portion of the chain corresponds to 161–196 (SLALRILFYRSNVINHFFCDLPPLLSLACSDVTVNE). N-linked (GlcNAc...) asparagine glycosylation is present at asparagine 195. A helical membrane pass occupies residues 197-217 (TLLFLVATLNESVTIMIILTS). Over 218 to 237 (YLLILTTILKIHSAESRHKA) the chain is Cytoplasmic. The chain crosses the membrane as a helical span at residues 238-258 (FSTCASHLTAITVSHGTILYI). The Extracellular segment spans residues 259–271 (YCRPSSGNSGDVD). The chain crosses the membrane as a helical span at residues 272–292 (KVATVFYTVVIPMLNPLIYSL). At 293-311 (RNKDVNKALRKVMGSKIHS) the chain is on the cytoplasmic side.

The protein belongs to the G-protein coupled receptor 1 family.

The protein resides in the cell membrane. Functionally, odorant receptor. In Homo sapiens (Human), this protein is Olfactory receptor 5L2 (OR5L2).